The following is a 396-amino-acid chain: Enoyl-[acyl-carrier-protein] reductase [NADH] (396 aa).

Residues 47 to 52, 73 to 74, 110 to 111, and 138 to 139 each bind NAD(+); these read GASTGF, FE, DA, and LA. Position 224 (Tyr-224) interacts with substrate. Catalysis depends on Tyr-234, which acts as the Proton donor. Residues Lys-243 and 272-274 contribute to the NAD(+) site; that span reads LVT.

The protein belongs to the TER reductase family. As to quaternary structure, monomer.

It catalyses the reaction a 2,3-saturated acyl-[ACP] + NAD(+) = a (2E)-enoyl-[ACP] + NADH + H(+). It participates in lipid metabolism; fatty acid biosynthesis. Its function is as follows. Involved in the final reduction of the elongation cycle of fatty acid synthesis (FAS II). Catalyzes the reduction of a carbon-carbon double bond in an enoyl moiety that is covalently linked to an acyl carrier protein (ACP). The protein is Enoyl-[acyl-carrier-protein] reductase [NADH] of Cytophaga hutchinsonii (strain ATCC 33406 / DSM 1761 / CIP 103989 / NBRC 15051 / NCIMB 9469 / D465).